The primary structure comprises 87 residues: Cell division topological specificity factor (87 aa).

Belongs to the MinE family.

Functionally, prevents the cell division inhibition by proteins MinC and MinD at internal division sites while permitting inhibition at polar sites. This ensures cell division at the proper site by restricting the formation of a division septum at the midpoint of the long axis of the cell. The sequence is that of Cell division topological specificity factor from Blochmanniella pennsylvanica (strain BPEN).